Reading from the N-terminus, the 198-residue chain is uncharacterized protein (198 aa).

The C4-type zinc-finger motif lies at 9-43; that stretch reads CPVCGGKGTFVITSHQIDIPYFGPVLETTMICEKC.

The protein belongs to the ZPR1 family.

This is an uncharacterized protein from Methanocaldococcus jannaschii (strain ATCC 43067 / DSM 2661 / JAL-1 / JCM 10045 / NBRC 100440) (Methanococcus jannaschii).